The chain runs to 566 residues: Phosphatidylinositol 3,4,5-trisphosphate 3-phosphatase TPTE2 (566 aa).

Transmembrane regions (helical) follow at residues 135-155, 173-193, 208-228, and 234-254; these read SFAFGIFGVFLVLLDVTLLLA, ISLAIALFFLMDVLLRVFVEG, AIIVTPLLVDVVYIFFDIKFL, and WIHLVRLLRLIILIRIFHLIH. In terms of domain architecture, Phosphatase tensin-type spans 272–448; the sequence is RRYTRDGFDL…GYFAQVKHLY (177 aa). The active-site Phosphocysteine intermediate is the C382. In terms of domain architecture, C2 tensin-type spans 455–566; the sequence is RRILFIKRFI…ILHSFRLVFT (112 aa).

It localises to the endoplasmic reticulum membrane. It is found in the golgi apparatus membrane. The catalysed reaction is a 1,2-diacyl-sn-glycero-3-phospho-(1D-myo-inositol-3,4,5-trisphosphate) + H2O = a 1,2-diacyl-sn-glycero-3-phospho-(1D-myo-inositol-4,5-bisphosphate) + phosphate. Its function is as follows. Acts as a lipid phosphatase, removing the phosphate in the D3 position of the inositol ring from phosphatidylinositol 3,4,5-trisphosphate. The sequence is that of Phosphatidylinositol 3,4,5-trisphosphate 3-phosphatase TPTE2 (TPTE2) from Macaca fascicularis (Crab-eating macaque).